Reading from the N-terminus, the 269-residue chain is Tryptophan synthase alpha chain (269 aa).

Active-site proton acceptor residues include Glu-49 and Asp-60.

Belongs to the TrpA family. As to quaternary structure, tetramer of two alpha and two beta chains.

The catalysed reaction is (1S,2R)-1-C-(indol-3-yl)glycerol 3-phosphate + L-serine = D-glyceraldehyde 3-phosphate + L-tryptophan + H2O. It functions in the pathway amino-acid biosynthesis; L-tryptophan biosynthesis; L-tryptophan from chorismate: step 5/5. In terms of biological role, the alpha subunit is responsible for the aldol cleavage of indoleglycerol phosphate to indole and glyceraldehyde 3-phosphate. The protein is Tryptophan synthase alpha chain of Pseudomonas putida (strain GB-1).